We begin with the raw amino-acid sequence, 320 residues long: o-succinylbenzoate synthase (320 aa).

The active-site Proton donor is lysine 133. 3 residues coordinate Mg(2+): aspartate 161, glutamate 190, and aspartate 213. The active-site Proton acceptor is the lysine 235.

The protein belongs to the mandelate racemase/muconate lactonizing enzyme family. MenC type 1 subfamily. A divalent metal cation is required as a cofactor.

It catalyses the reaction (1R,6R)-6-hydroxy-2-succinyl-cyclohexa-2,4-diene-1-carboxylate = 2-succinylbenzoate + H2O. The protein operates within quinol/quinone metabolism; 1,4-dihydroxy-2-naphthoate biosynthesis; 1,4-dihydroxy-2-naphthoate from chorismate: step 4/7. Its pathway is quinol/quinone metabolism; menaquinone biosynthesis. Converts 2-succinyl-6-hydroxy-2,4-cyclohexadiene-1-carboxylate (SHCHC) to 2-succinylbenzoate (OSB). This is o-succinylbenzoate synthase from Citrobacter koseri (strain ATCC BAA-895 / CDC 4225-83 / SGSC4696).